We begin with the raw amino-acid sequence, 191 residues long: uncharacterized protein (191 aa).

A signal peptide spans Met1–Gly17. The segment at Thr82–Ile148 is disordered. A helical transmembrane segment spans residues Val168–Glu188.

It is found in the membrane. This is an uncharacterized protein from Saccharomyces cerevisiae (strain ATCC 204508 / S288c) (Baker's yeast).